The following is a 192-amino-acid chain: Glycerol-3-phosphate acyltransferase (192 aa).

5 helical membrane-spanning segments follow: residues 1–21 (MFIA…AYIL), 49–69 (GLAG…IYSL), 80–100 (ELCI…WLKF), 110–130 (IGVI…SWLF), and 143–163 (IVSI…VVAL).

This sequence belongs to the PlsY family. In terms of assembly, probably interacts with PlsX.

The protein resides in the cell inner membrane. It catalyses the reaction an acyl phosphate + sn-glycerol 3-phosphate = a 1-acyl-sn-glycero-3-phosphate + phosphate. It participates in lipid metabolism; phospholipid metabolism. Catalyzes the transfer of an acyl group from acyl-phosphate (acyl-PO(4)) to glycerol-3-phosphate (G3P) to form lysophosphatidic acid (LPA). This enzyme utilizes acyl-phosphate as fatty acyl donor, but not acyl-CoA or acyl-ACP. The chain is Glycerol-3-phosphate acyltransferase from Anaplasma phagocytophilum (strain HZ).